A 585-amino-acid polypeptide reads, in one-letter code: Putative sulfur deprivation response regulator (585 aa).

The next 5 membrane-spanning stretches (helical) occupy residues 5-25, 30-50, 83-103, 117-137, and 162-182; these read VVDADVCLFAASTLLLLRGII, AFAGLANDSIVSIALMMMIAA, VASVSAVMNNTPLVAVMIPVV, FMMPLSYSAILGGLCTIIGTS, and IIGLPLTVAGGIYVVLFSPLL. RCK C-terminal domains are found at residues 189–274 and 288–372; these read MMAA…LPGL and ETVA…STEW. The next 5 membrane-spanning stretches (helical) occupy residues 389–409, 411–431, 442–462, 482–502, and 561–581; these read LALFMSLGIFIALIVLNSMDV, PLSTTALVCLFAYLITGVLTV, ILLTVAGGFGVAKAMTVTGLA, VAAIYASTSLLTALLSNGAAV, and FGLPLQFVAALITVPICVLYF.

Belongs to the CitM (TC 2.A.11) transporter family.

The protein resides in the membrane. Its function is as follows. Not known; mutations in SAC1 produces cells that cannot synthesize arylsulfatase and cannot take up sulfate as rapidly as wild-type cells. SAC1 is necessary for cells to survive sulfur deprivation. This Chlamydomonas reinhardtii (Chlamydomonas smithii) protein is Putative sulfur deprivation response regulator (SAC1).